A 170-amino-acid polypeptide reads, in one-letter code: Mitochondrial fission 1 protein A (170 aa).

The TPR repeat unit spans residues 90–123 (REKLYLLAVGYYRSGNYSRSRQLVDRCIEMQADW). The helical transmembrane segment at 142–162 (VIGIGITATAFGAVGLIAGGI) threads the bilayer.

It belongs to the FIS1 family. As to quaternary structure, interacts with ARC5.

The protein resides in the mitochondrion outer membrane. The protein localises to the peroxisome membrane. In terms of biological role, component of the peroxisomal and mitochondrial division machineries. Plays a role in promoting the fission of mitochondria and peroxisomes. The sequence is that of Mitochondrial fission 1 protein A (FIS1A) from Arabidopsis thaliana (Mouse-ear cress).